A 163-amino-acid polypeptide reads, in one-letter code: Cyclic pyranopterin monophosphate synthase (163 aa).

Substrate-binding positions include 76 to 78 (LCH) and 114 to 115 (ME). Residue D129 is part of the active site.

This sequence belongs to the MoaC family. As to quaternary structure, homohexamer; trimer of dimers.

It catalyses the reaction (8S)-3',8-cyclo-7,8-dihydroguanosine 5'-triphosphate = cyclic pyranopterin phosphate + diphosphate. It participates in cofactor biosynthesis; molybdopterin biosynthesis. In terms of biological role, catalyzes the conversion of (8S)-3',8-cyclo-7,8-dihydroguanosine 5'-triphosphate to cyclic pyranopterin monophosphate (cPMP). The polypeptide is Cyclic pyranopterin monophosphate synthase (Desulfovibrio desulfuricans (strain ATCC 27774 / DSM 6949 / MB)).